Here is a 211-residue protein sequence, read N- to C-terminus: Mitotic spindle assembly checkpoint protein MAD2B (211 aa).

An HORMA domain is found at 13-203; that stretch reads QVVADVLCEF…SDILKMQLYV (191 aa). Positions 21-155 are mediates interaction with REV1 and REV3L and homodimerization; that stretch reads EFLEVAVHLI…FTVLVHTREA (135 aa). A mediates interaction with ipaB region spans residues 150 to 211; the sequence is VHTREAATRN…YVEERAHKGS (62 aa).

In terms of assembly, homooligomer. Heterodimer with REV3L. This dimer forms the minimal DNA polymerase zeta complex (Pol-zeta2), with REV3L bearing DNA polymerase catalytic activity, although its activity is very low in this context. Component of the tetrameric Pol-zeta complex (Pol-zeta4), which consists of REV3L, MAD2L2, POLD2 and POLD3; Pol-zeta4 is the fully active form of DNA polymerase zeta. Component of the shieldin complex, consisting of SHLD1, SHLD2, SHLD3 and MAD2L2/REV7. Within the complex, SHLD2 forms a scaffold which interacts with a SHLD3-MAD2L2 subcomplex via its N-terminus, and with SHLD1 via its C-terminus. Interacts with REV1. Interacts with ADAM9. Interacts with CHAMP1. Interacts with FZR1 (in complex with the anaphase promoting complex APC). Interacts with CDC20; PubMed:11459825 could not detect the interaction. Interacts with RAN. Interacts with ELK1; the interaction is direct and recruits MAD2L2 to ELK1-specific promoters. May interact with the JNK kinases MAPK8 and/or MAPK9 to stimulate ELK1 phosphorylation and transcriptional activity upon DNA damage. Interacts with TCF7L2; prevents its binding to promoters and negatively modulates its transcriptional activity. Interacts with YY1AP1. Interacts with S.flexneri protein ipaB; prevents the interaction of MAD2L2 with FZR1 and CDC20 resulting in an activation of the anaphase-promoting complex APC and a cell cycle arrest. Interacts with PRCC; the interaction is direct. Interacts with POGZ. Interacts with ASTE1. As to expression, ubiquitously expressed.

The protein localises to the nucleus. Its subcellular location is the cytoplasm. It localises to the cytoskeleton. It is found in the spindle. The protein resides in the chromosome. Its function is as follows. Adapter protein able to interact with different proteins and involved in different biological processes. Mediates the interaction between the error-prone DNA polymerase zeta catalytic subunit REV3L and the inserter polymerase REV1, thereby mediating the second polymerase switching in translesion DNA synthesis. Translesion DNA synthesis releases the replication blockade of replicative polymerases, stalled in presence of DNA lesions. Component of the shieldin complex, which plays an important role in repair of DNA double-stranded breaks (DSBs). During G1 and S phase of the cell cycle, the complex functions downstream of TP53BP1 to promote non-homologous end joining (NHEJ) and suppress DNA end resection. Mediates various NHEJ-dependent processes including immunoglobulin class-switch recombination, and fusion of unprotected telomeres. May also regulate another aspect of cellular response to DNA damage through regulation of the JNK-mediated phosphorylation and activation of the transcriptional activator ELK1. Inhibits the FZR1- and probably CDC20-mediated activation of the anaphase promoting complex APC thereby regulating progression through the cell cycle. Regulates TCF7L2-mediated gene transcription and may play a role in epithelial-mesenchymal transdifferentiation. This chain is Mitotic spindle assembly checkpoint protein MAD2B (MAD2L2), found in Homo sapiens (Human).